Consider the following 445-residue polypeptide: Phosphoglucosamine mutase (445 aa).

S102 serves as the catalytic Phosphoserine intermediate. Positions 102, 241, 243, and 245 each coordinate Mg(2+). The residue at position 102 (S102) is a Phosphoserine.

It belongs to the phosphohexose mutase family. The cofactor is Mg(2+). Post-translationally, activated by phosphorylation.

It carries out the reaction alpha-D-glucosamine 1-phosphate = D-glucosamine 6-phosphate. In terms of biological role, catalyzes the conversion of glucosamine-6-phosphate to glucosamine-1-phosphate. This Novosphingobium aromaticivorans (strain ATCC 700278 / DSM 12444 / CCUG 56034 / CIP 105152 / NBRC 16084 / F199) protein is Phosphoglucosamine mutase.